The following is a 247-amino-acid chain: NAD-dependent protein deacetylase (247 aa).

Residues 1–247 form the Deacetylase sirtuin-type domain; that stretch reads MDTRKNLKEL…LGGIVEELGY (247 aa). Residues Ala23, Thr27, Phe34, Arg35, Gln104, Ile106, Asp107, and His122 each coordinate NAD(+). Phe34 contacts nicotinamide. Nicotinamide-binding residues include Ile106 and Asp107. Residue His122 is the Proton acceptor of the active site. Zn(2+) contacts are provided by Cys130, Cys133, Cys152, and Cys155. NAD(+)-binding residues include Thr193, Ser194, Asn216, and Ile234.

The protein belongs to the sirtuin family. Class U subfamily. Zn(2+) is required as a cofactor.

The protein localises to the cytoplasm. It carries out the reaction N(6)-acetyl-L-lysyl-[protein] + NAD(+) + H2O = 2''-O-acetyl-ADP-D-ribose + nicotinamide + L-lysyl-[protein]. NAD-dependent protein deacetylase which modulates the activities of several enzymes which are inactive in their acetylated form. In Clostridium tetani (strain Massachusetts / E88), this protein is NAD-dependent protein deacetylase.